The primary structure comprises 146 residues: Ribonuclease H (146 aa).

Residues 1 to 143 (MQKKIIVYTD…CDELARQAIK (143 aa)) enclose the RNase H type-1 domain. Asp10, Glu48, Asp70, and Asp135 together coordinate Mg(2+).

It belongs to the RNase H family. As to quaternary structure, monomer. Mg(2+) serves as cofactor.

Its subcellular location is the cytoplasm. The catalysed reaction is Endonucleolytic cleavage to 5'-phosphomonoester.. In terms of biological role, endonuclease that specifically degrades the RNA of RNA-DNA hybrids. This Chlorobium phaeobacteroides (strain DSM 266 / SMG 266 / 2430) protein is Ribonuclease H.